Here is a 245-residue protein sequence, read N- to C-terminus: tRNA (guanine-N(1)-)-methyltransferase (245 aa).

Gly-114 contacts S-adenosyl-L-methionine.

This sequence belongs to the RNA methyltransferase TrmD family. Homodimer.

The protein resides in the cytoplasm. The catalysed reaction is guanosine(37) in tRNA + S-adenosyl-L-methionine = N(1)-methylguanosine(37) in tRNA + S-adenosyl-L-homocysteine + H(+). In terms of biological role, specifically methylates guanosine-37 in various tRNAs. This Sphingopyxis alaskensis (strain DSM 13593 / LMG 18877 / RB2256) (Sphingomonas alaskensis) protein is tRNA (guanine-N(1)-)-methyltransferase.